The primary structure comprises 160 residues: Ribosomal RNA large subunit methyltransferase H (160 aa).

S-adenosyl-L-methionine contacts are provided by residues Leu-76, Gly-108, and 127–132 (LGKLTW).

This sequence belongs to the RNA methyltransferase RlmH family. As to quaternary structure, homodimer.

It localises to the cytoplasm. The catalysed reaction is pseudouridine(1915) in 23S rRNA + S-adenosyl-L-methionine = N(3)-methylpseudouridine(1915) in 23S rRNA + S-adenosyl-L-homocysteine + H(+). Specifically methylates the pseudouridine at position 1915 (m3Psi1915) in 23S rRNA. In Agrobacterium fabrum (strain C58 / ATCC 33970) (Agrobacterium tumefaciens (strain C58)), this protein is Ribosomal RNA large subunit methyltransferase H.